The chain runs to 214 residues: Ribosomal RNA small subunit methyltransferase G (214 aa).

S-adenosyl-L-methionine contacts are provided by residues glycine 81, methionine 86, alanine 132–glutamate 133, and arginine 147.

This sequence belongs to the methyltransferase superfamily. RNA methyltransferase RsmG family.

It localises to the cytoplasm. The catalysed reaction is guanosine(527) in 16S rRNA + S-adenosyl-L-methionine = N(7)-methylguanosine(527) in 16S rRNA + S-adenosyl-L-homocysteine. Functionally, specifically methylates the N7 position of guanine in position 527 of 16S rRNA. The chain is Ribosomal RNA small subunit methyltransferase G from Pseudomonas syringae pv. syringae (strain B728a).